A 229-amino-acid polypeptide reads, in one-letter code: Sugar fermentation stimulation protein homolog (229 aa).

The protein belongs to the SfsA family.

The protein is Sugar fermentation stimulation protein homolog of Carboxydothermus hydrogenoformans (strain ATCC BAA-161 / DSM 6008 / Z-2901).